We begin with the raw amino-acid sequence, 186 residues long: UPF0301 protein HI_0304 (186 aa).

The protein belongs to the UPF0301 (AlgH) family.

This is UPF0301 protein HI_0304 from Haemophilus influenzae (strain ATCC 51907 / DSM 11121 / KW20 / Rd).